Reading from the N-terminus, the 126-residue chain is Glycine cleavage system H protein (126 aa).

Residues 24–106 (TVTVGITDHA…YGEGWMYRIK (83 aa)) form the Lipoyl-binding domain. Lys-65 is subject to N6-lipoyllysine.

This sequence belongs to the GcvH family. The glycine cleavage system is composed of four proteins: P, T, L and H. (R)-lipoate is required as a cofactor.

Its function is as follows. The glycine cleavage system catalyzes the degradation of glycine. The H protein shuttles the methylamine group of glycine from the P protein to the T protein. The protein is Glycine cleavage system H protein of Psychrobacter sp. (strain PRwf-1).